A 391-amino-acid chain; its full sequence is Tryptophan synthase beta chain (391 aa).

At lysine 86 the chain carries N6-(pyridoxal phosphate)lysine.

Belongs to the TrpB family. In terms of assembly, tetramer of two alpha and two beta chains. Requires pyridoxal 5'-phosphate as cofactor.

It carries out the reaction (1S,2R)-1-C-(indol-3-yl)glycerol 3-phosphate + L-serine = D-glyceraldehyde 3-phosphate + L-tryptophan + H2O. It participates in amino-acid biosynthesis; L-tryptophan biosynthesis; L-tryptophan from chorismate: step 5/5. Its function is as follows. The beta subunit is responsible for the synthesis of L-tryptophan from indole and L-serine. The chain is Tryptophan synthase beta chain from Vibrio metschnikovii.